Consider the following 484-residue polypeptide: Coronin-1B (484 aa).

Serine 2 carries the post-translational modification Phosphoserine. 5 WD repeats span residues 80-120 (GHTG…LTSP), 130-170 (GHTK…ELYR), 174-213 (LHPD…LVAE), 217-260 (AHEG…EPMA), and 265-305 (DSSN…PYIH). A coiled-coil region spans residues 447-481 (KLEEVMHGLRALRVLVKEQGERISRLEEHLGRMEN).

It belongs to the WD repeat coronin family. Forms homooligomers, but does not form complexes with the other coronins. Interacts with Arp2/3 complex components, including ACTR2, ARPC1B and ARPC2. Binds actin. Post-translationally, phosphorylation on Ser-2 regulates the interaction with the Arp2/3 complex and cell motility in fibroblasts. Phosphorylation does not seem to affect subcellular location.

It is found in the cytoplasm. Its subcellular location is the cytoskeleton. The protein localises to the stress fiber. Regulates leading edge dynamics and cell motility in fibroblasts. May be involved in cytokinesis and signal transduction. The protein is Coronin-1B (Coro1b) of Rattus norvegicus (Rat).